We begin with the raw amino-acid sequence, 1012 residues long: DNA polymerase catalytic subunit (1012 aa).

Residues 1–31 (MDFFNPFIDPTRGGPRNTVRQPTPSQSPTVP) form a disordered region. Residues 21–31 (QPTPSQSPTVP) are compositionally biased toward low complexity.

Belongs to the DNA polymerase type-B family. In terms of assembly, forms a complex with the ssDNA-binding protein, the DNA polymerase processivity factor, and the alkaline exonuclease. Interacts with the putative helicase-primase complex subunit; this interaction may coordinate leading and lagging strand DNA synthesis at the replication fork.

Its subcellular location is the host nucleus. The enzyme catalyses DNA(n) + a 2'-deoxyribonucleoside 5'-triphosphate = DNA(n+1) + diphosphate. It carries out the reaction Endonucleolytic cleavage to 5'-phosphomonoester.. In terms of biological role, replicates viral genomic DNA. The replication complex is composed of six viral proteins: the DNA polymerase, processivity factor, primase, primase-associated factor, helicase, and ssDNA-binding protein. Additionally, the polymerase contains an intrinsic ribonuclease H (RNase H) activity that specifically degrades RNA/DNA heteroduplexes or duplex DNA substrates in the 5' to 3' direction. Therefore, it can catalyze the excision of the RNA primers that initiate the synthesis of Okazaki fragments at a replication fork during viral DNA replication. This Human herpesvirus 8 type P (isolate GK18) (HHV-8) protein is DNA polymerase catalytic subunit (ORF9).